Here is a 147-residue protein sequence, read N- to C-terminus: Hemoglobin subunit beta (147 aa).

The Globin domain maps to 3–147 (EWTDDERAII…VVSALGRQYH (145 aa)). Residues H64 and H93 each coordinate heme b.

It belongs to the globin family. In terms of assembly, heterotetramer of two alpha chains and two beta chains. Red blood cells.

Functionally, involved in oxygen transport from gills to the various peripheral tissues. The protein is Hemoglobin subunit beta (hbb) of Merlangius merlangus (Whiting).